The following is a 349-amino-acid chain: Anthranilate phosphoribosyltransferase (349 aa).

5-phospho-alpha-D-ribose 1-diphosphate contacts are provided by residues Gly-82, 85-86 (GD), 92-95 (NVST), 110-118 (KHGNRAVSG), and Ser-122. Gly-82 lines the anthranilate pocket. Residue Ser-94 coordinates Mg(2+). Position 113 (Asn-113) interacts with anthranilate. Arg-168 contributes to the anthranilate binding site. Mg(2+)-binding residues include Asp-227 and Glu-228.

It belongs to the anthranilate phosphoribosyltransferase family. In terms of assembly, homodimer. Requires Mg(2+) as cofactor.

The enzyme catalyses N-(5-phospho-beta-D-ribosyl)anthranilate + diphosphate = 5-phospho-alpha-D-ribose 1-diphosphate + anthranilate. It participates in amino-acid biosynthesis; L-tryptophan biosynthesis; L-tryptophan from chorismate: step 2/5. Its function is as follows. Catalyzes the transfer of the phosphoribosyl group of 5-phosphorylribose-1-pyrophosphate (PRPP) to anthranilate to yield N-(5'-phosphoribosyl)-anthranilate (PRA). The sequence is that of Anthranilate phosphoribosyltransferase from Pseudomonas fluorescens (strain ATCC BAA-477 / NRRL B-23932 / Pf-5).